We begin with the raw amino-acid sequence, 394 residues long: MGSFGMLSRRTLGTDMPVMAQIRSLMAELTNPMSLAQGVVHWQPPQKALEKVKELVWDPIISSYGPDEGLPELRQALLKKLREENKLTNSQVMVTAGANQAFVNLVITLCDAGDSVVMFEPYYFNSYMAFQMTGVTNIIVGPGQSDTLYPDADWLERTLSESKPTPKVVTVVNPGNPSGTYVPEPLLKRIAQICKDAGCWLIVDNTYEYFMYDGLKHCCVEGDHIVNVFSFSKTYGMMGWRLGYIAYSERLDGFATELVKIQDNIPICAAIISQRLAVYALEEGSGWITERVKSLVKNRDIVKEALEPLGKENVKGGEGAIYLWAKLPEGHRDDFKVVRWLAHRHGVVVIPGCASGSPGYLRVSFGGLQEVEMRAAAARLRKGIEELLHHGMVE.

N-acetylglycine is present on G2. Position 38 (G38) interacts with substrate. Pyridoxal 5'-phosphate-binding positions include Y64, 98–99 (AN), Y123, N176, Y207, and 230–232 (SFS). Y123 and N176 together coordinate substrate. The residue at position 233 (K233) is an N6-(pyridoxal phosphate)lysine. R241 is a pyridoxal 5'-phosphate binding site. Residues R362 and R374 each contribute to the substrate site.

This sequence belongs to the class-I pyridoxal-phosphate-dependent aminotransferase family. Homodimer. Pyridoxal 5'-phosphate is required as a cofactor. In terms of tissue distribution, expressed in roots, cotyledons and flowers.

Its subcellular location is the cytoplasm. It catalyses the reaction a 2-oxocarboxylate + L-methionine = 4-methylsulfanyl-2-oxobutanoate + an L-alpha-amino acid. The enzyme catalyses L-tryptophan + 2-oxoglutarate = indole-3-pyruvate + L-glutamate. The catalysed reaction is L-tyrosine + 2-oxoglutarate = 3-(4-hydroxyphenyl)pyruvate + L-glutamate. Coordinates and prevents auxin (IAA) and ethylene biosynthesis, thus regulating auxin homeostasis in young seedlings. Shows aminotransferase activity with methionine; can use the ethylene biosynthetic intermediate L-methionine (L-Met) as an amino donor and the auxin biosynthetic intermediate, indole-3-pyruvic acid (3-IPA) as an amino acceptor to produce L-tryptophan (L-Trp) and 2-oxo-4-methylthiobutyric acid (KMBA). Can also use tryptophan (Trp), phenylalanine (Phe), and tyrosine (Tyr) as substrates. Regulates tryptophan (Trp) homeostasis and catabolism in mature plants. Also possibly involved in the metabolism of other aromatic amino acids and phenylpropanoid homeostasis. This chain is Aromatic aminotransferase ISS1, found in Arabidopsis thaliana (Mouse-ear cress).